The primary structure comprises 117 residues: Large ribosomal subunit protein bL19 (117 aa).

It belongs to the bacterial ribosomal protein bL19 family.

This protein is located at the 30S-50S ribosomal subunit interface and may play a role in the structure and function of the aminoacyl-tRNA binding site. The sequence is that of Large ribosomal subunit protein bL19 from Proteus mirabilis (strain HI4320).